A 98-amino-acid chain; its full sequence is Large ribosomal subunit protein uL23 (98 aa).

This sequence belongs to the universal ribosomal protein uL23 family. Part of the 50S ribosomal subunit. Contacts protein L29, and trigger factor when it is bound to the ribosome.

One of the early assembly proteins it binds 23S rRNA. One of the proteins that surrounds the polypeptide exit tunnel on the outside of the ribosome. Forms the main docking site for trigger factor binding to the ribosome. In Bifidobacterium longum (strain DJO10A), this protein is Large ribosomal subunit protein uL23.